The primary structure comprises 292 residues: tRNA pseudouridine synthase B (292 aa).

Aspartate 38 acts as the Nucleophile in catalysis.

Belongs to the pseudouridine synthase TruB family. Type 1 subfamily.

It catalyses the reaction uridine(55) in tRNA = pseudouridine(55) in tRNA. Responsible for synthesis of pseudouridine from uracil-55 in the psi GC loop of transfer RNAs. This chain is tRNA pseudouridine synthase B, found in Streptococcus pneumoniae serotype 4 (strain ATCC BAA-334 / TIGR4).